The primary structure comprises 329 residues: Ribosomal RNA small subunit methyltransferase C (329 aa).

This sequence belongs to the methyltransferase superfamily. RsmC family. As to quaternary structure, monomer.

The protein resides in the cytoplasm. It carries out the reaction guanosine(1207) in 16S rRNA + S-adenosyl-L-methionine = N(2)-methylguanosine(1207) in 16S rRNA + S-adenosyl-L-homocysteine + H(+). Its function is as follows. Specifically methylates the guanine in position 1207 of 16S rRNA in the 30S particle. The sequence is that of Ribosomal RNA small subunit methyltransferase C from Haemophilus ducreyi (strain 35000HP / ATCC 700724).